Here is a 1340-residue protein sequence, read N- to C-terminus: DNA-directed RNA polymerase subunit beta (1340 aa).

This sequence belongs to the RNA polymerase beta chain family. In terms of assembly, the RNAP catalytic core consists of 2 alpha, 1 beta, 1 beta' and 1 omega subunit. When a sigma factor is associated with the core the holoenzyme is formed, which can initiate transcription.

It carries out the reaction RNA(n) + a ribonucleoside 5'-triphosphate = RNA(n+1) + diphosphate. In terms of biological role, DNA-dependent RNA polymerase catalyzes the transcription of DNA into RNA using the four ribonucleoside triphosphates as substrates. This Baumannia cicadellinicola subsp. Homalodisca coagulata protein is DNA-directed RNA polymerase subunit beta.